A 399-amino-acid polypeptide reads, in one-letter code: Elongation factor Tu (399 aa).

A tr-type G domain is found at 10 to 209; sequence KPHVNVGTIG…EVDKYIPTPQ (200 aa). Residues 19-26 form a G1 region; that stretch reads GHVDHGKT. 19 to 26 provides a ligand contact to GTP; the sequence is GHVDHGKT. Position 26 (Thr26) interacts with Mg(2+). A G2 region spans residues 60 to 64; the sequence is GITIA. Residues 81–84 are G3; the sequence is DCPG. Residues 81–85 and 136–139 contribute to the GTP site; these read DCPGH and NKQD. The interval 136–139 is G4; that stretch reads NKQD. The tract at residues 174–176 is G5; it reads SAL.

Belongs to the TRAFAC class translation factor GTPase superfamily. Classic translation factor GTPase family. EF-Tu/EF-1A subfamily. In terms of assembly, monomer.

The protein localises to the cytoplasm. The enzyme catalyses GTP + H2O = GDP + phosphate + H(+). Functionally, GTP hydrolase that promotes the GTP-dependent binding of aminoacyl-tRNA to the A-site of ribosomes during protein biosynthesis. This is Elongation factor Tu from Helicobacter hepaticus (strain ATCC 51449 / 3B1).